A 91-amino-acid chain; its full sequence is MQDIPREQSLIEYPSAFPIKVMGAHVPGFLEAIVEIALRFDPAFAPDSVEQRPSKAGNYLGLTITVTATSRDQLDALYRELSGHPMVKIVL.

This sequence belongs to the UPF0250 family.

The sequence is that of UPF0250 protein Lcho_4239 from Leptothrix cholodnii (strain ATCC 51168 / LMG 8142 / SP-6) (Leptothrix discophora (strain SP-6)).